The following is a 248-amino-acid chain: Ras-related protein Rab-28 (248 aa).

Residues 1 to 30 are disordered; it reads MTTMGEDEAPALPKKSPLPEKIDEADVDDD. Position 42 to 50 (42 to 50) interacts with GTP; that stretch reads GDGASGKTS. The Effector region motif lies at 64–72; sequence YHQTLGLDF. GTP contacts are provided by residues 91-95, 152-155, and 182-184; these read DIGGQ, NKTD, and SAK. Residues 227 to 248 form a disordered region; sequence QSDASYARRSDQSRSTSVCSIT. Residues 239–248 are compositionally biased toward polar residues; it reads SRSTSVCSIT.

Belongs to the small GTPase superfamily. Rab family. In terms of tissue distribution, expressed in amphid and phasmid ciliated sensory neurons.

The protein resides in the cell projection. Its subcellular location is the cilium membrane. The protein localises to the perikaryon. It localises to the cytoplasm. It is found in the cytoskeleton. The protein resides in the cilium axoneme. Its function is as follows. GTPase. Intraflagellar transport (IFT) cargo that undergoes bidirectional IFT along the ciliary axoneme when in active GTP-bound state in amphid and phasmid ciliated sensory neurons. Targeting and function as IFT cargo may depend on the BBSome, an IFT cargo adapter. Does not undergo IFT when in inactive GDP-bound state. May in turn play a role in cilium structure and/or function in ciliated sensory neurons. The protein is Ras-related protein Rab-28 of Caenorhabditis elegans.